The sequence spans 135 residues: Large ribosomal subunit protein eL32 (135 aa).

It belongs to the eukaryotic ribosomal protein eL32 family.

This is Large ribosomal subunit protein eL32 from Methanococcus maripaludis (strain C6 / ATCC BAA-1332).